Consider the following 319-residue polypeptide: ATP-dependent 6-phosphofructokinase (319 aa).

Gly11 is a binding site for ATP. Position 21–25 (21–25 (RAVVR)) interacts with ADP. ATP-binding positions include 72–73 (RC) and 102–105 (GDGS). Asp103 serves as a coordination point for Mg(2+). 125 to 127 (TID) provides a ligand contact to substrate. Asp127 functions as the Proton acceptor in the catalytic mechanism. Arg154 lines the ADP pocket. Substrate contacts are provided by residues Arg162 and 169–171 (MGR). ADP is bound by residues 185–187 (GAE), Arg211, and 213–215 (KLH). Residues Glu222, Arg243, and 249–252 (HLQR) contribute to the substrate site.

This sequence belongs to the phosphofructokinase type A (PFKA) family. ATP-dependent PFK group I subfamily. Prokaryotic clade 'B1' sub-subfamily. In terms of assembly, homotetramer. The cofactor is Mg(2+).

Its subcellular location is the cytoplasm. The catalysed reaction is beta-D-fructose 6-phosphate + ATP = beta-D-fructose 1,6-bisphosphate + ADP + H(+). Its pathway is carbohydrate degradation; glycolysis; D-glyceraldehyde 3-phosphate and glycerone phosphate from D-glucose: step 3/4. With respect to regulation, allosterically activated by ADP and other diphosphonucleosides, and allosterically inhibited by phosphoenolpyruvate. In terms of biological role, catalyzes the phosphorylation of D-fructose 6-phosphate to fructose 1,6-bisphosphate by ATP, the first committing step of glycolysis. This Clostridium novyi (strain NT) protein is ATP-dependent 6-phosphofructokinase.